The chain runs to 255 residues: MWIGIISLFPEMFKAITEFGVTGRAVKQNLLQVSCWNPRDFTHDKHKTVDDRPYGGGPGMLMMVQPLRDAIHAAKAEAGDGVKVIYLSPQGRKLDQTGVTELAANEKLILVCGRYEGIDERLIQTEIDEEWSIGDYVLTGGELPAMTLIDAVARFVPGVLGKQASAEEDSFAEGLLDCPHYTRPEVLDGYVVPPVLMSGNHEEIRKWRLKQSLERTWLRRPELLEKLALTDEQKKLLKDIIEAYHIRQSKTSDNG.

Residues glycine 113 and 133 to 138 (IGDYVL) each bind S-adenosyl-L-methionine.

It belongs to the RNA methyltransferase TrmD family. As to quaternary structure, homodimer.

The protein resides in the cytoplasm. It catalyses the reaction guanosine(37) in tRNA + S-adenosyl-L-methionine = N(1)-methylguanosine(37) in tRNA + S-adenosyl-L-homocysteine + H(+). Functionally, specifically methylates guanosine-37 in various tRNAs. This is tRNA (guanine-N(1)-)-methyltransferase from Mannheimia succiniciproducens (strain KCTC 0769BP / MBEL55E).